We begin with the raw amino-acid sequence, 71 residues long: Small ribosomal subunit protein bS21 (71 aa).

A disordered region spans residues 47–71 (RENATRAKRHAKRVARENARNTRLY). Basic and acidic residues predominate over residues 60–71 (VARENARNTRLY).

It belongs to the bacterial ribosomal protein bS21 family.

In Histophilus somni (strain 129Pt) (Haemophilus somnus), this protein is Small ribosomal subunit protein bS21.